Consider the following 197-residue polypeptide: MQKVVLATGNAGKVRELASLLSDFGLDVVAQTKLGVDSAEETGLTFIENAILKARHAAKMTGLPAIADDSGLAVDVLGGAPGIYSARYSGENATDQQNLEKLLHTLRDVPDDKRQARFHCVLVYLRHAEDPTPIVCHGSWPGVITRQAAGNGGFGYDPIFFVPSEGKTAAELTREEKSAISHRGQALKLLLDALRNG.

8–13 (TGNAGK) is a binding site for substrate. Mg(2+)-binding residues include Glu-40 and Asp-69. Catalysis depends on Asp-69, which acts as the Proton acceptor. Substrate contacts are provided by residues Ser-70, 154–157 (FGYD), Lys-177, and 182–183 (HR).

This sequence belongs to the HAM1 NTPase family. Homodimer. Requires Mg(2+) as cofactor.

It carries out the reaction XTP + H2O = XMP + diphosphate + H(+). It catalyses the reaction dITP + H2O = dIMP + diphosphate + H(+). The enzyme catalyses ITP + H2O = IMP + diphosphate + H(+). Pyrophosphatase that catalyzes the hydrolysis of nucleoside triphosphates to their monophosphate derivatives, with a high preference for the non-canonical purine nucleotides XTP (xanthosine triphosphate), dITP (deoxyinosine triphosphate) and ITP. Seems to function as a house-cleaning enzyme that removes non-canonical purine nucleotides from the nucleotide pool, thus preventing their incorporation into DNA/RNA and avoiding chromosomal lesions. This chain is dITP/XTP pyrophosphatase (rdgB), found in Salmonella typhi.